Reading from the N-terminus, the 570-residue chain is Urease subunit alpha (570 aa).

Residues 131–570 enclose the Urease domain; sequence GGFDSHIHFI…LPMAQRYFLF (440 aa). H136, H138, and K219 together coordinate Ni(2+). K219 is subject to N6-carboxylysine. H221 contributes to the substrate binding site. The Ni(2+) site is built by H248 and H274. Catalysis depends on H322, which acts as the Proton donor. Residue D362 participates in Ni(2+) binding.

Belongs to the metallo-dependent hydrolases superfamily. Urease alpha subunit family. In terms of assembly, heterotrimer of UreA (gamma), UreB (beta) and UreC (alpha) subunits. Three heterotrimers associate to form the active enzyme. Requires Ni cation as cofactor. Carboxylation allows a single lysine to coordinate two nickel ions.

It is found in the cytoplasm. The enzyme catalyses urea + 2 H2O + H(+) = hydrogencarbonate + 2 NH4(+). The protein operates within nitrogen metabolism; urea degradation; CO(2) and NH(3) from urea (urease route): step 1/1. This chain is Urease subunit alpha, found in Beijerinckia indica subsp. indica (strain ATCC 9039 / DSM 1715 / NCIMB 8712).